Consider the following 263-residue polypeptide: tRNA pseudouridine synthase A (263 aa).

Catalysis depends on aspartate 73, which acts as the Nucleophile. Tyrosine 131 provides a ligand contact to substrate.

This sequence belongs to the tRNA pseudouridine synthase TruA family. In terms of assembly, homodimer.

It carries out the reaction uridine(38/39/40) in tRNA = pseudouridine(38/39/40) in tRNA. Formation of pseudouridine at positions 38, 39 and 40 in the anticodon stem and loop of transfer RNAs. In Mycoplasmoides gallisepticum (strain R(low / passage 15 / clone 2)) (Mycoplasma gallisepticum), this protein is tRNA pseudouridine synthase A.